A 434-amino-acid chain; its full sequence is Asparagine--tRNA ligase (434 aa).

This sequence belongs to the class-II aminoacyl-tRNA synthetase family. As to quaternary structure, homodimer.

The protein resides in the cytoplasm. The enzyme catalyses tRNA(Asn) + L-asparagine + ATP = L-asparaginyl-tRNA(Asn) + AMP + diphosphate + H(+). This is Asparagine--tRNA ligase from Oenococcus oeni (strain ATCC BAA-331 / PSU-1).